A 446-amino-acid chain; its full sequence is uncharacterized protein (446 aa).

The next 4 helical transmembrane spans lie at 69 to 89 (FWLW…VTYL), 98 to 118 (FFLV…VWLA), 169 to 189 (HSLW…LLLV), and 247 to 267 (GLLV…AWVV).

It localises to the membrane. This is an uncharacterized protein from Neisseria meningitidis serogroup B (strain ATCC BAA-335 / MC58).